Consider the following 354-residue polypeptide: Holliday junction branch migration complex subunit RuvB (354 aa).

The disordered stretch occupies residues Met-1–Ser-22. Residues Thr-5–Tyr-193 are large ATPase domain (RuvB-L). ATP contacts are provided by residues Leu-32, Arg-33, Gly-74, Lys-77, Thr-78, Thr-79, Glu-140 to Tyr-142, Arg-183, Tyr-193, and Arg-230. Thr-78 is a binding site for Mg(2+). The segment at Thr-194–Asp-264 is small ATPAse domain (RuvB-S). A head domain (RuvB-H) region spans residues Pro-267–Ile-354. DNA-binding residues include Arg-303, Arg-322, and Arg-327.

This sequence belongs to the RuvB family. In terms of assembly, homohexamer. Forms an RuvA(8)-RuvB(12)-Holliday junction (HJ) complex. HJ DNA is sandwiched between 2 RuvA tetramers; dsDNA enters through RuvA and exits via RuvB. An RuvB hexamer assembles on each DNA strand where it exits the tetramer. Each RuvB hexamer is contacted by two RuvA subunits (via domain III) on 2 adjacent RuvB subunits; this complex drives branch migration. In the full resolvosome a probable DNA-RuvA(4)-RuvB(12)-RuvC(2) complex forms which resolves the HJ.

Its subcellular location is the cytoplasm. It catalyses the reaction ATP + H2O = ADP + phosphate + H(+). Functionally, the RuvA-RuvB-RuvC complex processes Holliday junction (HJ) DNA during genetic recombination and DNA repair, while the RuvA-RuvB complex plays an important role in the rescue of blocked DNA replication forks via replication fork reversal (RFR). RuvA specifically binds to HJ cruciform DNA, conferring on it an open structure. The RuvB hexamer acts as an ATP-dependent pump, pulling dsDNA into and through the RuvAB complex. RuvB forms 2 homohexamers on either side of HJ DNA bound by 1 or 2 RuvA tetramers; 4 subunits per hexamer contact DNA at a time. Coordinated motions by a converter formed by DNA-disengaged RuvB subunits stimulates ATP hydrolysis and nucleotide exchange. Immobilization of the converter enables RuvB to convert the ATP-contained energy into a lever motion, pulling 2 nucleotides of DNA out of the RuvA tetramer per ATP hydrolyzed, thus driving DNA branch migration. The RuvB motors rotate together with the DNA substrate, which together with the progressing nucleotide cycle form the mechanistic basis for DNA recombination by continuous HJ branch migration. Branch migration allows RuvC to scan DNA until it finds its consensus sequence, where it cleaves and resolves cruciform DNA. In Variovorax paradoxus (strain S110), this protein is Holliday junction branch migration complex subunit RuvB.